The sequence spans 872 residues: Valine--tRNA ligase (872 aa).

The short motif at 46-56 (PNVTGKLHIGH) is the 'HIGH' region element. The 'KMSKS' region motif lies at 523-527 (KMSKS). Residue Lys526 coordinates ATP. A coiled-coil region spans residues 796 to 872 (IEIANDSFIN…KDKLKELTND (77 aa)).

The protein belongs to the class-I aminoacyl-tRNA synthetase family. ValS type 1 subfamily. In terms of assembly, monomer.

The protein localises to the cytoplasm. The catalysed reaction is tRNA(Val) + L-valine + ATP = L-valyl-tRNA(Val) + AMP + diphosphate. Functionally, catalyzes the attachment of valine to tRNA(Val). As ValRS can inadvertently accommodate and process structurally similar amino acids such as threonine, to avoid such errors, it has a 'posttransfer' editing activity that hydrolyzes mischarged Thr-tRNA(Val) in a tRNA-dependent manner. The sequence is that of Valine--tRNA ligase from Mycoplasma mycoides subsp. mycoides SC (strain CCUG 32753 / NCTC 10114 / PG1).